Consider the following 406-residue polypeptide: Propionate kinase (406 aa).

ATP contacts are provided by asparagine 11 and lysine 18. A Mg(2+)-binding site is contributed by asparagine 11. Residue arginine 86 coordinates substrate. Residue aspartate 143 is the Proton donor/acceptor of the active site. Residues histidine 175, histidine 203–glycine 207, aspartate 278–arginine 280, and glycine 326–asparagine 330 each bind ATP.

Belongs to the acetokinase family. TdcD subfamily. As to quaternary structure, homodimer. Mg(2+) is required as a cofactor.

It carries out the reaction propanoate + ATP = propanoyl phosphate + ADP. It functions in the pathway amino-acid degradation; L-threonine degradation via propanoate pathway; propanoate from L-threonine: step 4/4. Catalyzes the conversion of propionyl phosphate and ADP to propionate and ATP. The chain is Propionate kinase from Yersinia enterocolitica serotype O:8 / biotype 1B (strain NCTC 13174 / 8081).